Here is a 234-residue protein sequence, read N- to C-terminus: Cysteine proteinase inhibitor 6 (234 aa).

The first 24 residues, Met-1–Ala-24, serve as a signal peptide directing secretion. Met-2 is modified (N-acetylalanine). Cystatin domains follow at residues Gly-38–Ser-126 and Ser-145–Glu-215. Residues Gln-82–Gly-86 carry the Secondary area of contact motif. Positions Ser-133 to Asp-154 are disordered. The segment covering Gln-140–Asp-154 has biased composition (basic and acidic residues). Ser-174 carries the phosphoserine modification.

Belongs to the cystatin family. Phytocystatin subfamily.

Its subcellular location is the secreted. Its function is as follows. Specific inhibitor of cysteine proteinases. Probably involved in the regulation of endogenous processes and in defense against pests and pathogens. This is Cysteine proteinase inhibitor 6 (CYS6) from Arabidopsis thaliana (Mouse-ear cress).